The primary structure comprises 864 residues: uncharacterized protein (864 aa).

This is an uncharacterized protein from Rickettsia typhi (strain ATCC VR-144 / Wilmington).